We begin with the raw amino-acid sequence, 831 residues long: Probable basic-leucine zipper transcription factor P (831 aa).

2 disordered regions span residues 1–33 (MNHR…PSII) and 54–166 (NITS…IASR). Over residues 54-85 (NITSSPSTSSSPPISTTTTTTTTTTTTATAKK) the composition is skewed to low complexity. Residues 87-96 (NSKEKKKTTN) are compositionally biased toward basic and acidic residues. A compositionally biased stretch (low complexity) spans 97–129 (KDNNNNNNNNNSNNQQQQQQQQQQQQQQQQQQQ). Positions 101-141 (NNNNNNNSNNQQQQQQQQQQQQQQQQQQQYEEEDDDEEDEG) form a coiled coil. Positions 130–143 (YEEEDDDEEDEGGD) are enriched in acidic residues. Positions 144-154 (DNTKVGKGEKM) are enriched in basic and acidic residues. Residues 151–214 (GEKMKARRTN…LELLKFSQEV (64 aa)) enclose the bZIP domain. The segment at 153–173 (KMKARRTNQNIASRNYRQRKK) is basic motif. Residues 176–183 (IKEMEDKI) form a leucine-zipper region. 2 stretches are compositionally biased toward low complexity: residues 469 to 484 (SSSS…SSTS) and 497 to 510 (SSSN…SASS). Disordered regions lie at residues 469-510 (SSSS…SASS), 658-697 (QQQA…HQNY), 715-771 (DATN…NTNK), and 787-810 (SLFS…QNDS). Residues 601–664 (AQQHAQQQAQ…QAAQQQAAQQ (64 aa)) adopt a coiled-coil conformation. Low complexity-rich tracts occupy residues 674-695 (PPQH…QQHQ), 720-750 (NNNN…NNNN), and 787-800 (SLFS…NSQS).

This sequence belongs to the bZIP family.

The protein resides in the nucleus. Probable transcriptional regulator. The polypeptide is Probable basic-leucine zipper transcription factor P (bzpP) (Dictyostelium discoideum (Social amoeba)).